The primary structure comprises 97 residues: Integration host factor subunit beta (97 aa).

The protein belongs to the bacterial histone-like protein family. Heterodimer of an alpha and a beta chain.

Its function is as follows. This protein is one of the two subunits of integration host factor, a specific DNA-binding protein that functions in genetic recombination as well as in transcriptional and translational control. In Buchnera aphidicola subsp. Cinara cedri (strain Cc), this protein is Integration host factor subunit beta.